We begin with the raw amino-acid sequence, 357 residues long: 4-hydroxyphenylpyruvate dioxygenase (357 aa).

VOC domains follow at residues Gly-17 to Arg-137 and Tyr-165 to Asp-316. 3 residues coordinate Fe cation: His-168, His-246, and Glu-325.

The protein belongs to the 4HPPD family. As to quaternary structure, homotetramer. Fe cation serves as cofactor.

It carries out the reaction 3-(4-hydroxyphenyl)pyruvate + O2 = homogentisate + CO2. The protein operates within amino-acid degradation; L-phenylalanine degradation; acetoacetate and fumarate from L-phenylalanine: step 3/6. The protein is 4-hydroxyphenylpyruvate dioxygenase (hpd) of Pseudomonas aeruginosa (strain ATCC 15692 / DSM 22644 / CIP 104116 / JCM 14847 / LMG 12228 / 1C / PRS 101 / PAO1).